Reading from the N-terminus, the 552-residue chain is Undecaprenyl phosphate-alpha-4-amino-4-deoxy-L-arabinose arabinosyl transferase (552 aa).

Transmembrane regions (helical) follow at residues 4–24 (IAGW…PLPG), 81–101 (FAVR…VFWL), 113–133 (VVAV…SYAV), 176–196 (FMTK…PWVI), 207–227 (FGPL…LAIA), 255–275 (APFW…LGLL), 289–309 (QGGD…FSIA), 313–333 (LPTY…GYVQ), 351–371 (LLVG…WGIT), 384–404 (VILG…SLYH), and 411–431 (WSAA…PQQV).

Belongs to the glycosyltransferase 83 family.

Its subcellular location is the cell inner membrane. The enzyme catalyses 4-amino-4-deoxy-alpha-L-arabinopyranosyl di-trans,octa-cis-undecaprenyl phosphate + lipid IVA = lipid IIA + di-trans,octa-cis-undecaprenyl phosphate.. It functions in the pathway lipopolysaccharide metabolism; 4-amino-4-deoxy-beta-L-arabinose-lipid A biosynthesis. Functionally, catalyzes the transfer of the L-Ara4N moiety of the glycolipid undecaprenyl phosphate-alpha-L-Ara4N to lipid A. The modified arabinose is attached to lipid A and is required for resistance to polymyxin and cationic antimicrobial peptides. The protein is Undecaprenyl phosphate-alpha-4-amino-4-deoxy-L-arabinose arabinosyl transferase of Edwardsiella ictaluri (strain 93-146).